A 233-amino-acid polypeptide reads, in one-letter code: Small ribosomal subunit protein uS3 (233 aa).

The 69-residue stretch at 39–107 (IRAFLKRKLY…DVNINIKEER (69 aa)) folds into the KH type-2 domain. The segment covering 212–222 (MQPEKTEESAP) has biased composition (basic and acidic residues). The disordered stretch occupies residues 212–233 (MQPEKTEESAPAKKSRRTRRGK). The segment covering 224-233 (KKSRRTRRGK) has biased composition (basic residues).

The protein belongs to the universal ribosomal protein uS3 family. In terms of assembly, part of the 30S ribosomal subunit. Forms a tight complex with proteins S10 and S14.

Binds the lower part of the 30S subunit head. Binds mRNA in the 70S ribosome, positioning it for translation. The polypeptide is Small ribosomal subunit protein uS3 (Campylobacter jejuni subsp. doylei (strain ATCC BAA-1458 / RM4099 / 269.97)).